Consider the following 553-residue polypeptide: Replication factor C large subunit (553 aa).

50–57 (GGPGVGKT) serves as a coordination point for ATP. A disordered region spans residues 438 to 553 (GKRPGKPEAG…SKKQRTLFDF (116 aa)). Residues 442–451 (GKPEAGEPRE) are compositionally biased toward basic and acidic residues. Residues 503-513 (EAPMAAAMPAA) are compositionally biased toward low complexity. Residues 532–553 (EPEKPPAAEDKCSKKQRTLFDF) are compositionally biased toward basic and acidic residues.

It belongs to the activator 1 small subunits family. RfcL subfamily. Heteromultimer composed of small subunits (RfcS) and large subunits (RfcL).

In terms of biological role, part of the RFC clamp loader complex which loads the PCNA sliding clamp onto DNA. This chain is Replication factor C large subunit, found in Methanocella arvoryzae (strain DSM 22066 / NBRC 105507 / MRE50).